Here is a 203-residue protein sequence, read N- to C-terminus: Recombination protein RecR (203 aa).

Residues 58–73 form a C4-type zinc finger; it reads CDYCGNLDVVSICNIC. One can recognise a Toprim domain in the interval 81–177; the sequence is SIIAIVESVA…KISKLASGIP (97 aa).

The protein belongs to the RecR family.

May play a role in DNA repair. It seems to be involved in an RecBC-independent recombinational process of DNA repair. It may act with RecF and RecO. The protein is Recombination protein RecR of Orientia tsutsugamushi (strain Boryong) (Rickettsia tsutsugamushi).